The primary structure comprises 82 residues: Small ribosomal subunit protein bS16 (82 aa).

This sequence belongs to the bacterial ribosomal protein bS16 family.

The sequence is that of Small ribosomal subunit protein bS16 from Clostridium botulinum (strain Okra / Type B1).